A 486-amino-acid chain; its full sequence is Glutamyl-tRNA(Gln) amidotransferase subunit A (486 aa).

Residues Lys79 and Ser154 each act as charge relay system in the active site. Ser178 serves as the catalytic Acyl-ester intermediate.

The protein belongs to the amidase family. GatA subfamily. Heterotrimer of A, B and C subunits.

The enzyme catalyses L-glutamyl-tRNA(Gln) + L-glutamine + ATP + H2O = L-glutaminyl-tRNA(Gln) + L-glutamate + ADP + phosphate + H(+). Functionally, allows the formation of correctly charged Gln-tRNA(Gln) through the transamidation of misacylated Glu-tRNA(Gln) in organisms which lack glutaminyl-tRNA synthetase. The reaction takes place in the presence of glutamine and ATP through an activated gamma-phospho-Glu-tRNA(Gln). This chain is Glutamyl-tRNA(Gln) amidotransferase subunit A, found in Dehalococcoides mccartyi (strain ATCC BAA-2100 / JCM 16839 / KCTC 5957 / BAV1).